The following is a 155-amino-acid chain: Small ribosomal subunit protein uS7c (155 aa).

Belongs to the universal ribosomal protein uS7 family. Part of the 30S ribosomal subunit.

The protein resides in the plastid. Its subcellular location is the chloroplast. In terms of biological role, one of the primary rRNA binding proteins, it binds directly to 16S rRNA where it nucleates assembly of the head domain of the 30S subunit. This chain is Small ribosomal subunit protein uS7c (rps7), found in Aristolochia macrophylla (Dutchman's pipe vine).